Reading from the N-terminus, the 147-residue chain is Hemoglobin subunit beta-3 (147 aa).

Residues Glu-2 to His-147 form the Globin domain. Heme b is bound by residues His-63 and His-92.

This sequence belongs to the globin family. In terms of assembly, heterotetramer of two alpha chains and two beta chains. Red blood cells.

Involved in oxygen transport from gills to the various peripheral tissues. This chain is Hemoglobin subunit beta-3 (hbb3), found in Muraena helena (Mediterranean moray).